The chain runs to 82 residues: ATP synthase subunit c (82 aa).

2 helical membrane passes run 7–27 (AASVVAAGLAVGLAAIGPGIG) and 57–77 (LAFMESLTIYGLVVALVLLFA).

Belongs to the ATPase C chain family. In terms of assembly, F-type ATPases have 2 components, F(1) - the catalytic core - and F(0) - the membrane proton channel. F(1) has five subunits: alpha(3), beta(3), gamma(1), delta(1), epsilon(1). F(0) has four main subunits: a(1), b(1), b'(1) and c(10-14). The alpha and beta chains form an alternating ring which encloses part of the gamma chain. F(1) is attached to F(0) by a central stalk formed by the gamma and epsilon chains, while a peripheral stalk is formed by the delta, b and b' chains.

It is found in the cellular thylakoid membrane. Its function is as follows. F(1)F(0) ATP synthase produces ATP from ADP in the presence of a proton or sodium gradient. F-type ATPases consist of two structural domains, F(1) containing the extramembraneous catalytic core and F(0) containing the membrane proton channel, linked together by a central stalk and a peripheral stalk. During catalysis, ATP synthesis in the catalytic domain of F(1) is coupled via a rotary mechanism of the central stalk subunits to proton translocation. In terms of biological role, key component of the F(0) channel; it plays a direct role in translocation across the membrane. A homomeric c-ring of between 10-14 subunits forms the central stalk rotor element with the F(1) delta and epsilon subunits. This Synechococcus sp. (strain RCC307) protein is ATP synthase subunit c.